The following is a 159-amino-acid chain: Endoribonuclease YbeY (159 aa).

Positions 122, 126, and 132 each coordinate Zn(2+).

Belongs to the endoribonuclease YbeY family. Requires Zn(2+) as cofactor.

Its subcellular location is the cytoplasm. In terms of biological role, single strand-specific metallo-endoribonuclease involved in late-stage 70S ribosome quality control and in maturation of the 3' terminus of the 16S rRNA. The protein is Endoribonuclease YbeY of Roseiflexus castenholzii (strain DSM 13941 / HLO8).